The following is a 446-amino-acid chain: Chromosomal replication initiator protein DnaA (446 aa).

Positions 1–81 (MENIADLWNS…AKLNIRFIIP (81 aa)) are domain I, interacts with DnaA modulators. Residues 81–109 (PQSQTEEEVDYPPAKAKKMNDESNHLPQS) form a domain II region. A domain III, AAA+ region region spans residues 110–326 (MLNPKYTFDT…GALIRVVAYS (217 aa)). ATP-binding residues include G154, G156, K157, and T158. Residues 327-446 (SLINKDINAD…QIEEINDILK (120 aa)) are domain IV, binds dsDNA.

The protein belongs to the DnaA family. As to quaternary structure, oligomerizes as a right-handed, spiral filament on DNA at oriC.

The protein resides in the cytoplasm. Plays an essential role in the initiation and regulation of chromosomal replication. ATP-DnaA binds to the origin of replication (oriC) to initiate formation of the DNA replication initiation complex once per cell cycle. Binds the DnaA box (a 9 base pair repeat at the origin) and separates the double-stranded (ds)DNA. Forms a right-handed helical filament on oriC DNA; dsDNA binds to the exterior of the filament while single-stranded (ss)DNA is stabiized in the filament's interior. The ATP-DnaA-oriC complex binds and stabilizes one strand of the AT-rich DNA unwinding element (DUE), permitting loading of DNA polymerase. After initiation quickly degrades to an ADP-DnaA complex that is not apt for DNA replication. Binds acidic phospholipids. This chain is Chromosomal replication initiator protein DnaA, found in Bacillus cytotoxicus (strain DSM 22905 / CIP 110041 / 391-98 / NVH 391-98).